The following is a 145-amino-acid chain: D-aminoacyl-tRNA deacylase (145 aa).

A Gly-cisPro motif, important for rejection of L-amino acids motif is present at residues 137–138 (GP).

The protein belongs to the DTD family. As to quaternary structure, homodimer.

The protein resides in the cytoplasm. The enzyme catalyses glycyl-tRNA(Ala) + H2O = tRNA(Ala) + glycine + H(+). It carries out the reaction a D-aminoacyl-tRNA + H2O = a tRNA + a D-alpha-amino acid + H(+). An aminoacyl-tRNA editing enzyme that deacylates mischarged D-aminoacyl-tRNAs. Also deacylates mischarged glycyl-tRNA(Ala), protecting cells against glycine mischarging by AlaRS. Acts via tRNA-based rather than protein-based catalysis; rejects L-amino acids rather than detecting D-amino acids in the active site. By recycling D-aminoacyl-tRNA to D-amino acids and free tRNA molecules, this enzyme counteracts the toxicity associated with the formation of D-aminoacyl-tRNA entities in vivo and helps enforce protein L-homochirality. This chain is D-aminoacyl-tRNA deacylase, found in Cronobacter sakazakii (strain ATCC BAA-894) (Enterobacter sakazakii).